The sequence spans 141 residues: Hemoglobin subunit alpha (141 aa).

In terms of domain architecture, Globin spans 1 to 141; the sequence is VLSANDKTNV…VSTVLTSKYR (141 aa). The residue at position 3 (Ser3) is a Phosphoserine. Lys7 carries the post-translational modification N6-succinyllysine. Position 8 is a phosphothreonine (Thr8). Lys11 bears the N6-succinyllysine mark. The residue at position 16 (Lys16) is an N6-acetyllysine; alternate. Residue Lys16 is modified to N6-succinyllysine; alternate. At Tyr24 the chain carries Phosphotyrosine. Ser35 carries the post-translational modification Phosphoserine. The residue at position 40 (Lys40) is an N6-succinyllysine. The residue at position 49 (Ser49) is a Phosphoserine. Gln58 contributes to the O2 binding site. His87 contributes to the heme b binding site. Residue Thr108 is modified to Phosphothreonine. Residues Ser124 and Ser131 each carry the phosphoserine modification. Phosphothreonine occurs at positions 134 and 137. Position 138 is a phosphoserine (Ser138).

Belongs to the globin family. As to quaternary structure, heterotetramer of two alpha chains and two beta chains. In terms of tissue distribution, red blood cells.

Involved in oxygen transport from the lung to the various peripheral tissues. In terms of biological role, hemopressin acts as an antagonist peptide of the cannabinoid receptor CNR1. Hemopressin-binding efficiently blocks cannabinoid receptor CNR1 and subsequent signaling. This is Hemoglobin subunit alpha (HBA) from Didelphis virginiana (North American opossum).